A 472-amino-acid chain; its full sequence is 2-oxoglutarate carboxylase small subunit (472 aa).

Residues 1-445 (MFKKVLVANR…TTRYLEEHPH (445 aa)) form the Biotin carboxylation domain. Residues K115 and E199 each contribute to the ATP site. One can recognise an ATP-grasp domain in the interval 119–316 (KEVMKRAGVP…IVKWQIRIAA (198 aa)). Residue R291 is part of the active site.

Heterohexadecamer of 8 large subunits and 8 small subunits. Mg(2+) serves as cofactor. It depends on Mn(2+) as a cofactor. Requires Co(2+) as cofactor.

It carries out the reaction hydrogencarbonate + 2-oxoglutarate + ATP = (S)-oxalosuccinate + ADP + phosphate + H(+). The chain is 2-oxoglutarate carboxylase small subunit from Hydrogenobacter thermophilus (strain DSM 6534 / IAM 12695 / TK-6).